The primary structure comprises 639 residues: MATGANATPLDFPSKKRKRSRWNQDTMEQKTVIPGMPTVIPPGLTREQERAYIVQLQIEDLTRKLRTGDLGIPPNPEDRSPSPEPIYNSEGKRLNTREFRTRKKLEEERHNLITEMVALNPDFKPPADYKPPATRVSDKVMIPQDEYPEINFVGLLIGPRGNTLKNIEKECNAKIMIRGKGSVKEGKVGRKDGQMLPGEDEPLHALVTANTMENVKKAVEQIRNILKQGIETPEDQNDLRKMQLRELARLNGTLREDDNRILRPWQSSETRSITNTTVCTKCGGAGHIASDCKFQRPGDPQSAQDKARMDKEYLSLMAELGEAPVPASVGSTSGPATTPLASAPRPAAPANNPPPPSLMSTTQSRPPWMNSGPSESRPYHGMHGGGPGGPGGGPHSFPHPLPSLTGGHGGHPMQHNPNGPPPPWMQPPPPPMNQGPHPPGHHGPPPMDQYLGSTPVGSGVYRLHQGKGMMPPPPMGMMPPPPPPPSGQPPPPPSGPLPPWQQQQQQPPPPPPPSSSMASSTPLPWQQNTTTTTTSAGTGSIPPWQQQQAAAAASPGAPQMQGNPTMVPLPPGVQPPLPPGAPPPPPPPPPGSAGMMYAPPPPPPPPMDPSNFVTMMGMGVAGMPPFGMPPAPPPPPPQN.

2 disordered regions span residues 1–42 (MATG…VIPP) and 65–94 (LRTGDLGIPPNPEDRSPSPEPIYNSEGKRL). The residue at position 2 (alanine 2) is an N-acetylalanine. Serine 14 carries the phosphoserine modification. A Nuclear localization signal motif is present at residues 15-19 (KKRKR). At serine 20 the chain carries Phosphoserine; by PKG. Phosphoserine occurs at positions 80 and 82. Phosphotyrosine is present on tyrosine 87. At serine 89 the chain carries Phosphoserine. The 82-residue stretch at 141–222 (MIPQDEYPEI…ENVKKAVEQI (82 aa)) folds into the KH domain. A CCHC-type zinc finger spans residues 277–296 (TVCTKCGGAGHIASDCKFQR). Residues 325-639 (VPASVGSTSG…PAPPPPPPQN (315 aa)) form a disordered region. Over residues 335–350 (PATTPLASAPRPAAPA) the composition is skewed to low complexity. Gly residues predominate over residues 382 to 394 (MHGGGPGGPGGGP). Residues 418-447 (NGPPPPWMQPPPPPMNQGPHPPGHHGPPPM) show a composition bias toward pro residues. Residue leucine 463 is modified to Phosphoserine. An Omega-N-methylarginine modification is found at lysine 467. A compositionally biased stretch (pro residues) spans 470 to 499 (MPPPPMGMMPPPPPPPSGQPPPPPSGPLPP). Composition is skewed to low complexity over residues 515-534 (SSMASSTPLPWQQNTTTTTT) and 542-566 (PPWQQQQAAAAASPGAPQMQGNPTM). Composition is skewed to pro residues over residues 567-591 (VPLPPGVQPPLPPGAPPPPPPPPPG) and 598-608 (APPPPPPPPMD). The span at 615 to 625 (MMGMGVAGMPP) shows a compositional bias: low complexity. Residues 626-639 (FGMPPAPPPPPPQN) show a composition bias toward pro residues.

Belongs to the BBP/SF1 family. As to quaternary structure, binds U2AF2. Interacts with U1 snRNA. Binds EWSR1, FUS and TAF15. Interacts with RBM17. Post-translationally, phosphorylation on Ser-20 interferes with U2AF2 binding and spliceosome assembly. Isoform 6 is phosphorylated on Ser-463. Detected in lung, ovary, adrenal gland, colon, kidney, muscle, pancreas, thyroid, placenta, brain, liver and heart.

The protein resides in the nucleus. Its function is as follows. Necessary for the ATP-dependent first step of spliceosome assembly. Binds to the intron branch point sequence (BPS) 5'-UACUAAC-3' of the pre-mRNA. May act as transcription repressor. This chain is Splicing factor 1 (SF1), found in Homo sapiens (Human).